A 382-amino-acid polypeptide reads, in one-letter code: FK506-binding protein 4 (382 aa).

Residues 139–274 (GLEVDEEIES…KEEPKKKITK (136 aa)) form a disordered region. Positions 141–173 (EVDEEIESDEEVESDEEIESDEEIESEEEEEEP) are enriched in acidic residues. Composition is skewed to basic and acidic residues over residues 180–190 (RPAEEVKEIAS) and 196–270 (EKKE…EPKK). Residues 295 to 382 (GQRVGMRYIG…VFDVKLLSMK (88 aa)) form the PPIase FKBP-type domain.

This sequence belongs to the FKBP-type PPIase family. FKBP3/4 subfamily. Binds to histones H3 and H4.

The protein resides in the nucleus. It catalyses the reaction [protein]-peptidylproline (omega=180) = [protein]-peptidylproline (omega=0). Its activity is regulated as follows. Inhibited by both FK506 and rapamycin. Its function is as follows. PPIase that acts as a histone chaperone. Histone proline isomerase that increases the rate of cis-trans isomerization at prolines on the histone H3 N-terminal tail. Proline isomerization influences H3 methylation thereby regulating gene expression. The chain is FK506-binding protein 4 (FKBP4) from Rhizopus delemar (strain RA 99-880 / ATCC MYA-4621 / FGSC 9543 / NRRL 43880) (Mucormycosis agent).